Here is a 399-residue protein sequence, read N- to C-terminus: Acetate kinase (399 aa).

N7 provides a ligand contact to Mg(2+). K14 contributes to the ATP binding site. Substrate is bound at residue R91. The active-site Proton donor/acceptor is D148. ATP is bound by residues 208–212 and 283–285; these read HLGNG and DFR. E384 serves as a coordination point for Mg(2+).

This sequence belongs to the acetokinase family. As to quaternary structure, homodimer. The cofactor is Mg(2+). It depends on Mn(2+) as a cofactor.

The protein resides in the cytoplasm. It carries out the reaction acetate + ATP = acetyl phosphate + ADP. The protein operates within metabolic intermediate biosynthesis; acetyl-CoA biosynthesis; acetyl-CoA from acetate: step 1/2. Catalyzes the formation of acetyl phosphate from acetate and ATP. Can also catalyze the reverse reaction. This chain is Acetate kinase, found in Dictyoglomus thermophilum (strain ATCC 35947 / DSM 3960 / H-6-12).